Consider the following 522-residue polypeptide: AAA ATPase forming ring-shaped complexes (522 aa).

Positions 1-26 (MGQEKHTDAASQSRDPEAVAAHENDQ) are disordered. Residues 20-57 (AAHENDQLRQRNHALAKALTRATEELRKAKAQLEQFMA) adopt a coiled-coil conformation. 248–253 (GNGKTL) serves as a coordination point for ATP.

Belongs to the AAA ATPase family. Homohexamer. Assembles into a hexameric ring structure.

This is AAA ATPase forming ring-shaped complexes from Bifidobacterium animalis subsp. lactis (strain AD011).